The sequence spans 362 residues: D-alanine--D-alanine ligase (362 aa).

The 205-residue stretch at 153–357 (KKIAREAGIP…YADLLTTLVS (205 aa)) folds into the ATP-grasp domain. 180–235 (RELLGLPVFVKPARGGSSIGISKVDSWRDLPAAIEEAASHDPKVIIEAMITGPEVE) contacts ATP. Residues Asp312, Glu324, and Asn326 each coordinate Mg(2+).

The protein belongs to the D-alanine--D-alanine ligase family. Requires Mg(2+) as cofactor. Mn(2+) is required as a cofactor.

It is found in the cytoplasm. It carries out the reaction 2 D-alanine + ATP = D-alanyl-D-alanine + ADP + phosphate + H(+). The protein operates within cell wall biogenesis; peptidoglycan biosynthesis. Cell wall formation. This is D-alanine--D-alanine ligase from Corynebacterium urealyticum (strain ATCC 43042 / DSM 7109).